Reading from the N-terminus, the 882-residue chain is Valine--tRNA ligase (882 aa).

The 'HIGH' region signature appears at 45-55 (PNVTGSLHIGH). The short motif at 525–529 (KFSKS) is the 'KMSKS' region element. Lys528 is an ATP binding site. Residues 812-881 (EGLIDVAKEK…VLKKGIQNLA (70 aa)) are a coiled coil.

The protein belongs to the class-I aminoacyl-tRNA synthetase family. ValS type 1 subfamily. As to quaternary structure, monomer.

Its subcellular location is the cytoplasm. The catalysed reaction is tRNA(Val) + L-valine + ATP = L-valyl-tRNA(Val) + AMP + diphosphate. Its function is as follows. Catalyzes the attachment of valine to tRNA(Val). As ValRS can inadvertently accommodate and process structurally similar amino acids such as threonine, to avoid such errors, it has a 'posttransfer' editing activity that hydrolyzes mischarged Thr-tRNA(Val) in a tRNA-dependent manner. This chain is Valine--tRNA ligase, found in Leptospira interrogans serogroup Icterohaemorrhagiae serovar copenhageni (strain Fiocruz L1-130).